The chain runs to 316 residues: Cell division protein FtsQ (316 aa).

The tract at residues 1-34 is disordered; sequence MAKAARRTKSAPARRSPRRHARQTGATIRRPKRP. The Cytoplasmic portion of the chain corresponds to 1 to 61; sequence MAKAARRTKS…HPLLKQMAKR (61 aa). The chain crosses the membrane as a helical span at residues 62 to 80; it reads LLLILVIVGFLAGLWAARW. Residues 81-316 lie on the Periplasmic side of the membrane; it reads PQLLATKTGE…AADPLVSDRI (236 aa). One can recognise a POTRA domain in the interval 97 to 165; it reads FSVRHVEIVG…DTLVVDIVER (69 aa). The segment at 295 to 316 is disordered; that stretch reads PEPVKKATKPAKAADPLVSDRI.

This sequence belongs to the FtsQ/DivIB family. FtsQ subfamily.

The protein localises to the cell inner membrane. In terms of biological role, essential cell division protein. This Zymomonas mobilis subsp. mobilis (strain ATCC 31821 / ZM4 / CP4) protein is Cell division protein FtsQ.